The following is a 384-amino-acid chain: GTPase Obg (384 aa).

Residues 1 to 159 form the Obg domain; that stretch reads MKFIDEAKIE…RSLQLELKVL (159 aa). A disordered region spans residues 20 to 46; it reads ATSFRREKFVPRGGPDGGDGGKGGSVW. Residues 33–43 show a composition bias toward gly residues; sequence GPDGGDGGKGG. One can recognise an OBG-type G domain in the interval 160-348; the sequence is ADVGLLGMPN…LVHQINQYLT (189 aa). GTP contacts are provided by residues 166–173, 191–195, 213–216, 284–287, and 329–331; these read GMPNAGKS, FTTLH, DIPG, NKLD, and SAL. S173 and T193 together coordinate Mg(2+).

It belongs to the TRAFAC class OBG-HflX-like GTPase superfamily. OBG GTPase family. As to quaternary structure, monomer. Requires Mg(2+) as cofactor.

The protein localises to the cytoplasm. In terms of biological role, an essential GTPase which binds GTP, GDP and possibly (p)ppGpp with moderate affinity, with high nucleotide exchange rates and a fairly low GTP hydrolysis rate. Plays a role in control of the cell cycle, stress response, ribosome biogenesis and in those bacteria that undergo differentiation, in morphogenesis control. This Neisseria meningitidis serogroup C (strain 053442) protein is GTPase Obg.